A 248-amino-acid chain; its full sequence is Isoprenyl transferase (248 aa).

Residue aspartate 23 is part of the active site. Aspartate 23 is a binding site for Mg(2+). Residues 24–27, tryptophan 28, arginine 36, histidine 40, and 68–70 each bind substrate; these read GNGR and STE. The Proton acceptor role is filled by asparagine 71. Substrate contacts are provided by residues tryptophan 72, arginine 74, arginine 185, and 191 to 193; that span reads RIS. Residue glutamate 204 participates in Mg(2+) binding.

Belongs to the UPP synthase family. Homodimer. Requires Mg(2+) as cofactor.

Its function is as follows. Catalyzes the condensation of isopentenyl diphosphate (IPP) with allylic pyrophosphates generating different type of terpenoids. This is Isoprenyl transferase from Neisseria meningitidis serogroup A / serotype 4A (strain DSM 15465 / Z2491).